We begin with the raw amino-acid sequence, 118 residues long: Large ribosomal subunit protein bL20 (118 aa).

It belongs to the bacterial ribosomal protein bL20 family.

Functionally, binds directly to 23S ribosomal RNA and is necessary for the in vitro assembly process of the 50S ribosomal subunit. It is not involved in the protein synthesizing functions of that subunit. The sequence is that of Large ribosomal subunit protein bL20 from Staphylococcus saprophyticus subsp. saprophyticus (strain ATCC 15305 / DSM 20229 / NCIMB 8711 / NCTC 7292 / S-41).